A 537-amino-acid chain; its full sequence is Chaperonin GroEL 1 (537 aa).

ATP is bound by residues 29-32 (TLGP), 86-90 (DGTTT), glycine 413, and aspartate 494.

The protein belongs to the chaperonin (HSP60) family. As to quaternary structure, forms a cylinder of 14 subunits composed of two heptameric rings stacked back-to-back. Interacts with the co-chaperonin GroES.

It localises to the cytoplasm. It catalyses the reaction ATP + H2O + a folded polypeptide = ADP + phosphate + an unfolded polypeptide.. In terms of biological role, together with its co-chaperonin GroES, plays an essential role in assisting protein folding. The GroEL-GroES system forms a nano-cage that allows encapsulation of the non-native substrate proteins and provides a physical environment optimized to promote and accelerate protein folding. The protein is Chaperonin GroEL 1 of Mycobacterium leprae (strain TN).